Here is a 57-residue protein sequence, read N- to C-terminus: MIVWNLICPKCGKRLRYKVDVCPCMASEVELPNCPDCGEKMVHDYTSLKGRRRIRRG.

This is an uncharacterized protein from Methanocaldococcus jannaschii (strain ATCC 43067 / DSM 2661 / JAL-1 / JCM 10045 / NBRC 100440) (Methanococcus jannaschii).